Reading from the N-terminus, the 402-residue chain is MYTSEEKCNQRTQKRKIYNVCPRKGKKIFIHMHEIIQIDGHIYQCLECKQNFCENLALIMCERTHTGEKPYKCDMCEKTFVQSSDLTSHQRIHNYEKPYKCSKCEKSFWHHLALSGHQRTHAGKKFYTCDICGKNFGQSSDLLVHQRSHTGEKPYLCSECDKCFSRSTNLIRHRRTHTGEKPFKCLECEKAFSGKSDLISHQRTHTGERPYKCNKCEKSYRHRSAFIVHKRVHTGEKPYKCGACEKCFGQKSDLIVHQRVHTGEKPYKCLECMRSFTRSANLIRHQATHTHTFKCLEYEKSFNCSSDLIVHQRIHMEEKPHQWSACESGFLLGMDFVAQQKMRTQTEELHYKYTVCDKSFHQSSALLQHQTVHIGEKPFVCNVSEKGLELSPPHASEASQMS.

The C2H2-type 1; atypical zinc finger occupies 43–65 (YQCLECKQNFCENLALIMCERTH). C2H2-type zinc fingers lie at residues 71–93 (YKCD…QRIH), 99–121 (YKCS…QRTH), 127–149 (YTCD…QRSH), 155–177 (YLCS…RRTH), 183–205 (FKCL…QRTH), 211–233 (YKCN…KRVH), 239–261 (YKCG…QRVH), and 267–289 (YKCL…QATH). The segment at 293–315 (FKCLEYEKSFNCSSDLIVHQRIH) adopts a C2H2-type 10; degenerate zinc-finger fold. The C2H2-type 11; degenerate zinc finger occupies 351–373 (YKYTVCDKSFHQSSALLQHQTVH). Position 391 is a phosphoserine (S391).

The protein belongs to the krueppel C2H2-type zinc-finger protein family. Interacts with POU5F1. In terms of tissue distribution, ubiquitous. Highly expressed in heart and skeletal muscle.

Its subcellular location is the cytoplasm. The protein resides in the nucleus. In terms of biological role, transcriptional activator. Important for maintenance of pluripotency in embryonic stem cells. Binds directly to the POU5F1 distal enhancer and the NANOG proximal promoter, and enhances expression of both genes. Can also bind to numerous other gene promoters and regulates expression of many other pluripotency factors, either directly or indirectly. Promotes inhibition of MAPK signaling during embryonic stem cell differentiation. In Homo sapiens (Human), this protein is Zinc finger protein 322 (ZNF322).